The following is a 123-amino-acid chain: Small ribosomal subunit protein uS12 (123 aa).

Residue Asp-89 is modified to 3-methylthioaspartic acid. The disordered stretch occupies residues 104–123; it reads SVGVKDRKKSRSKYGAKRPK. Positions 109-123 are enriched in basic residues; sequence DRKKSRSKYGAKRPK.

This sequence belongs to the universal ribosomal protein uS12 family. As to quaternary structure, part of the 30S ribosomal subunit. Contacts proteins S8 and S17. May interact with IF1 in the 30S initiation complex.

In terms of biological role, with S4 and S5 plays an important role in translational accuracy. Its function is as follows. Interacts with and stabilizes bases of the 16S rRNA that are involved in tRNA selection in the A site and with the mRNA backbone. Located at the interface of the 30S and 50S subunits, it traverses the body of the 30S subunit contacting proteins on the other side and probably holding the rRNA structure together. The combined cluster of proteins S8, S12 and S17 appears to hold together the shoulder and platform of the 30S subunit. This is Small ribosomal subunit protein uS12 from Pelobacter propionicus (strain DSM 2379 / NBRC 103807 / OttBd1).